A 400-amino-acid polypeptide reads, in one-letter code: Eukaryotic translation initiation factor 3 subunit M (400 aa).

One can recognise a PCI domain in the interval 180–354; sequence LIAKIYSALV…QSFAVHRAQK (175 aa).

Belongs to the eIF-3 subunit M family. As to quaternary structure, component of the eukaryotic translation initiation factor 3 (eIF-3) complex.

Its subcellular location is the cytoplasm. Component of the eukaryotic translation initiation factor 3 (eIF-3) complex, which is involved in protein synthesis of a specialized repertoire of mRNAs and, together with other initiation factors, stimulates binding of mRNA and methionyl-tRNAi to the 40S ribosome. The eIF-3 complex specifically targets and initiates translation of a subset of mRNAs involved in cell proliferation. This is Eukaryotic translation initiation factor 3 subunit M from Yarrowia lipolytica (strain CLIB 122 / E 150) (Yeast).